Consider the following 957-residue polypeptide: Calsyntenin-3 (957 aa).

A signal peptide spans 1 to 19; the sequence is MTLLLVSLLLASLLQISSG. Residues 1–21 lie on the Cytoplasmic side of the membrane; that stretch reads MTLLLVSLLLASLLQISSGNK. Residues 20–848 lie on the Extracellular side of the membrane; it reads NKANKHKPWI…SHRNSMVPSA (829 aa). The helical intramembrane region spans 22–42; that stretch reads ANKHKPWIEAEYQGIVMENDN. 2 Cadherin domains span residues 29–145 and 146–246; these read IEAE…APVF and VERL…KPSW. The Cytoplasmic portion of the chain corresponds to 43–73; sequence TVLLNPPLFALDKDAPLRYAGEICGFRLHGS. Positions 74–94 form an intramembrane region, helical; the sequence is GVPFKAVILDKATGEGLIRAK. Over 95 to 139 the chain is Cytoplasmic; the sequence is EPVDCEAQKEHTFTTQAYDCVDGPDGANTKKSHKATVHVRVNDVN. Positions 140-160 form an intramembrane region, helical; it reads EFAPVFVERLYRAAVTEGKLY. At 161-248 the chain is on the cytoplasmic side; that stretch reads DRILRVEAID…KPTCKPSWQG (88 aa). A helical membrane pass occupies residues 249–269; the sequence is WNKRIEYAPGAGSLALFPGIR. Over 270-357 the chain is Lumenal; the sequence is LETCDEPLWN…GTQAVQVPLG (88 aa). 5 N-linked (GlcNAc...) asparagine glycosylation sites follow: N299, N327, N347, N508, and N741. A helical membrane pass occupies residues 849–869; that stretch reads ATLIIVVCVGFLVLMVILGLV. Topologically, residues 870 to 957 are cytoplasmic; it reads RIHSLHRRVS…RIIESPPHRY (88 aa). Positions 916–957 are disordered; that stretch reads QQTGVAGVAGGQQEEEDSSDSEAADSPSSDERRIIESPPHRY. Residues 928 to 938 show a composition bias toward acidic residues; the sequence is QEEEDSSDSEA. Residues 944-957 are compositionally biased toward basic and acidic residues; sequence SDERRIIESPPHRY.

The protein belongs to the calsyntenin family. As to quaternary structure, interacts (via cadherin domains) with both alpha and beta isoforms of neurexins (NRXN1, NRXN2 and NRXN3). Directly interacts with APBA2. Forms a tripartite complex with APBA2 and APP. Interacts with low affinity with KLC1. Interacts with SLC23A2/SVCT2. Interacts with CIDEA; inhibiting the lipid transferase activity of CIDEA. Interacts with CIDEC; inhibiting the lipid transferase activity of CIDEC. Proteolytically processed under normal cellular conditions. A primary zeta-cleavage generates a large extracellular (soluble) N-terminal domain (sAlc) and a short C-terminal transmembrane fragment (CTF1). A secondary cleavage catalyzed by gamma-secretase within the transmembrane domain releases the beta-Alc-beta chain in the extracellular milieu and produces an intracellular fragment (AlcICD). This processing is strongly suppressed in the tripartite complex formed with APBA2 and APP, which seems to prevent the association with gamma-secretase. In terms of processing, ubiquitinated: endoplasmic reticulum-localized protein is ubiquitinated and degraded by the endoplasmic reticulum-associated degradation (ERAD) pathway.

Its subcellular location is the postsynaptic cell membrane. It localises to the endoplasmic reticulum membrane. It is found in the golgi apparatus membrane. The protein resides in the cell projection. The protein localises to the dendrite. Its subcellular location is the lipid droplet. Its function is as follows. Postsynaptic adhesion molecule that binds to presynaptic neurexins to mediate both excitatory and inhibitory synapse formation. Promotes synapse development by acting as a cell adhesion molecule at the postsynaptic membrane, which associates with both neurexin-alpha and neurexin-beta proteins at the presynaptic membrane. Regulates the balance between excitatory and inhibitory synapses by inhibiting formation of excitatory parallel-fiber synapses and promoting formation of inhibitory synapses in the same neuron. May also be involved in ascorbate (vitamin C) uptake via its interaction with SLC23A2/SVCT2. Complex formation with APBA2 and APP, stabilizes APP metabolism and enhances APBA2-mediated suppression of beta-APP40 secretion, due to the retardation of intracellular APP maturation. Functionally, adipose-specific isoform that plays a key role in adaptive thermogenesis. Facilitates the efficient use of stored triglyceride by promoting multilocular morphology of thermogenic adipocytes: acts by inhibiting the activity of CIDEA and CIDEC on lipid droplets, thereby preventing lipid droplet fusion and facilitating lipid utilization. May also participate in adaptive thermogenesis by promoting sympathetic innervation of thermogenic adipose tissue: acts by driving secretion of neurotrophic factor S100B from brown adipocytes, stimulating neurite outgrowth from sympathetic neurons. This Rattus norvegicus (Rat) protein is Calsyntenin-3.